A 468-amino-acid polypeptide reads, in one-letter code: Eukaryotic translation initiation factor 3 subunit M (468 aa).

Residues 40-61 form a disordered region; it reads VAPLIEPLRQQEQSEEEPDRKQ. The region spanning 206 to 377 is the PCI domain; that stretch reads DLELAQTHVV…SEFLVHRATY (172 aa). The disordered stretch occupies residues 419-468; it reads QAAAEEVGQGKSGDKGAKGGDRRRNPQQQQQSQPSQPQQAREVELVGGAE. Positions 430–442 are enriched in basic and acidic residues; sequence SGDKGAKGGDRRR. Residues 444-457 are compositionally biased toward low complexity; sequence PQQQQQSQPSQPQQ.

The protein belongs to the eIF-3 subunit M family. As to quaternary structure, component of the eukaryotic translation initiation factor 3 (eIF-3) complex.

Its subcellular location is the cytoplasm. Its function is as follows. Component of the eukaryotic translation initiation factor 3 (eIF-3) complex, which is involved in protein synthesis of a specialized repertoire of mRNAs and, together with other initiation factors, stimulates binding of mRNA and methionyl-tRNAi to the 40S ribosome. The eIF-3 complex specifically targets and initiates translation of a subset of mRNAs involved in cell proliferation. The polypeptide is Eukaryotic translation initiation factor 3 subunit M (Aspergillus fumigatus (strain CBS 144.89 / FGSC A1163 / CEA10) (Neosartorya fumigata)).